The primary structure comprises 144 residues: Deoxyuridine 5'-triphosphate nucleotidohydrolase (144 aa).

Residues Arg-63–Gly-65, Asn-76, and Thr-80–Asp-82 each bind substrate.

Belongs to the dUTPase family. Mg(2+) serves as cofactor.

The enzyme catalyses dUTP + H2O = dUMP + diphosphate + H(+). It participates in pyrimidine metabolism; dUMP biosynthesis; dUMP from dCTP (dUTP route): step 2/2. In terms of biological role, this enzyme is involved in nucleotide metabolism: it produces dUMP, the immediate precursor of thymidine nucleotides and it decreases the intracellular concentration of dUTP so that uracil cannot be incorporated into DNA. The polypeptide is Deoxyuridine 5'-triphosphate nucleotidohydrolase (Flavobacterium johnsoniae (strain ATCC 17061 / DSM 2064 / JCM 8514 / BCRC 14874 / CCUG 350202 / NBRC 14942 / NCIMB 11054 / UW101) (Cytophaga johnsonae)).